The primary structure comprises 504 residues: DnaJ homolog subfamily C member 3 (504 aa).

An N-terminal signal peptide occupies residues 1–31 (MVAPGSVTSRLGSVFPFLLVLVDLQYEGAEC). 9 TPR repeats span residues 37-70 (VEKHLELGKKLLAAGQLADALSQFHAAVDGDPDN), 72-104 (IAYYRRATVFLAMGKSKAALPDLTKVIELKMDF), 105-138 (TAARLQRGHLLLKQGKLDEAEDDFKKVLKSNPSE), 154-187 (MQRLRSQALDAFESSDFTAAITFLDKILEVCVWD), 189-221 (ELRELRAECFIKEGEPRKAISDLKASSKLKNDN), 222-255 (TEAFYKISTLYYELGDHELSLSEVRECLKLDQDH), 268-301 (LNKLIESAEELIKEGRYTDAISKYESVMKTEPGV), 306-339 (IRSKERICHCFSKDEKPVEAIRVCSEVLQVEPDN), and 340-373 (VNALKDRAEAYLIEEMYDEAIQDYETAQEHNEND). Cys-248 and Cys-258 form a disulfide bridge. Ser-274 carries the post-translational modification Phosphoserine. A disulfide bond links Cys-313 and Cys-329. The tract at residues 375 to 393 (QIREGLEKAQRLLKQSQRR) is flexible linker. Residues 394–462 (DYYKILGVKR…EMRKKFDDGE (69 aa)) form the J domain. Positions 451–481 (DPEMRKKFDDGEDPLDAESQQGGGGNPFHRS) are disordered.

As to quaternary structure, interacts with EIF2AK4/GCN2; this interaction occurs under endoplasmic reticulum (ER) stress, hypothermic and amino acid starving stress conditions and inhibits EIF2AK4/GCN2 kinase activity. Interacts with EIF2AK3. Interacts with EIF2AK2. Forms a trimeric complex with DNAJB1 and HSPA8. Interacts with THAP12.

It localises to the endoplasmic reticulum. Involved in the unfolded protein response (UPR) during endoplasmic reticulum (ER) stress. Acts as a negative regulator of the EIF2AK4/GCN2 kinase activity by preventing the phosphorylation of eIF-2-alpha at 'Ser-52' and hence attenuating general protein synthesis under ER stress, hypothermic and amino acid starving stress conditions. Co-chaperone of HSPA8/HSC70, it stimulates its ATPase activity. May inhibit both the autophosphorylation of EIF2AK2/PKR and the ability of EIF2AK2 to catalyze phosphorylation of the EIF2A. May inhibit EIF2AK3/PERK activity. This is DnaJ homolog subfamily C member 3 (DNAJC3) from Bos taurus (Bovine).